We begin with the raw amino-acid sequence, 103 residues long: Co-chaperonin GroES (103 aa).

This sequence belongs to the GroES chaperonin family. Heptamer of 7 subunits arranged in a ring. Interacts with the chaperonin GroEL.

The protein localises to the cytoplasm. Together with the chaperonin GroEL, plays an essential role in assisting protein folding. The GroEL-GroES system forms a nano-cage that allows encapsulation of the non-native substrate proteins and provides a physical environment optimized to promote and accelerate protein folding. GroES binds to the apical surface of the GroEL ring, thereby capping the opening of the GroEL channel. This Synechocystis sp. (strain ATCC 27184 / PCC 6803 / Kazusa) protein is Co-chaperonin GroES.